A 291-amino-acid chain; its full sequence is MMTQSIGRSMLTVMATLPLLFSSATLHAQANSVQQQLEALEKSSGGRLGVALINTADNSQILYRADERFAMCSTSKVMAAAAVLKQSESDKHLLNQRVEIKKSDLVNYNPIAEKHVNGTMTLAELGAAALQYSDNTAMNKLIAHLGGPDKVTAFARSLGDETFRLDRTEPTLNTAIPGDPRDTTTPLAMAQTLKNLTLGKALAETQRAQLVTWLKGNTTGSASIRAGLPKSWVVGDKTGSGDYGTTNDIAVIWPENHAPLVLVTYFTQPEQKAESRRDILAAAAKIVTHGF.

Residues M1–A28 form the signal peptide. S73 functions as the Acyl-ester intermediate in the catalytic mechanism. K237–G239 contacts substrate.

The protein belongs to the class-A beta-lactamase family.

It carries out the reaction a beta-lactam + H2O = a substituted beta-amino acid. Its function is as follows. Is probably capable of hydrolyzing cephalosporins such as ceftriaxone and ceftazidime, thus conferring resistance to these antibiotics. The polypeptide is Beta-lactamase CTX-M-97 (bla) (Escherichia coli).